Consider the following 226-residue polypeptide: Thymidylate kinase (226 aa).

20–27 lines the ATP pocket; that stretch reads GGEGAGKS.

This sequence belongs to the thymidylate kinase family.

The enzyme catalyses dTMP + ATP = dTDP + ADP. In terms of biological role, phosphorylation of dTMP to form dTDP in both de novo and salvage pathways of dTTP synthesis. The polypeptide is Thymidylate kinase (Bradyrhizobium sp. (strain ORS 278)).